Consider the following 331-residue polypeptide: Biotin synthase (331 aa).

The Radical SAM core domain maps to 46–275; the sequence is YYGKKVKLNM…TKEIRISGGR (230 aa). [4Fe-4S] cluster is bound by residues C64, C68, and C71. C108, C140, C200, and R270 together coordinate [2Fe-2S] cluster.

The protein belongs to the radical SAM superfamily. Biotin synthase family. Homodimer. [4Fe-4S] cluster serves as cofactor. It depends on [2Fe-2S] cluster as a cofactor.

The enzyme catalyses (4R,5S)-dethiobiotin + (sulfur carrier)-SH + 2 reduced [2Fe-2S]-[ferredoxin] + 2 S-adenosyl-L-methionine = (sulfur carrier)-H + biotin + 2 5'-deoxyadenosine + 2 L-methionine + 2 oxidized [2Fe-2S]-[ferredoxin]. It participates in cofactor biosynthesis; biotin biosynthesis; biotin from 7,8-diaminononanoate: step 2/2. In terms of biological role, catalyzes the conversion of dethiobiotin (DTB) to biotin by the insertion of a sulfur atom into dethiobiotin via a radical-based mechanism. The polypeptide is Biotin synthase (Lysinibacillus sphaericus (strain C3-41)).